Reading from the N-terminus, the 274-residue chain is GCN5-related N-acetyltransferase 7, chloroplastic (274 aa).

The N-terminal 65 residues, 1–65 (MAFLCSSLPS…STFVISESVS (65 aa)), are a transit peptide targeting the chloroplast. The N-acetyltransferase domain occupies 75-267 (LRVRTFNELN…QRLLLWLALP (193 aa)). Residues 189-191 (VCV), 197-202 (RNGVGY), 228-230 (NEA), and Tyr-235 contribute to the acetyl-CoA site. Tyr-235 serves as the catalytic Proton donor.

The protein belongs to the acetyltransferase family. GNAT subfamily. In terms of assembly, oligomer. Autoacetylated. Expressed in green tissues.

The protein localises to the plastid. The protein resides in the chloroplast. It carries out the reaction an N-terminal L-alpha-aminoacyl-[protein] + acetyl-CoA = N-terminal N(alpha)-acetyl-L-alpha-aminoacyl-[protein] + CoA + H(+). It catalyses the reaction L-lysyl-[protein] + acetyl-CoA = N(6)-acetyl-L-lysyl-[protein] + CoA + H(+). The catalysed reaction is N-terminal L-alanyl-[protein] + acetyl-CoA = N-terminal N(alpha)-acetyl-L-alanyl-[protein] + CoA + H(+). The enzyme catalyses N-terminal L-seryl-[protein] + acetyl-CoA = N-terminal N(alpha)-acetyl-L-seryl-[protein] + CoA + H(+). It carries out the reaction N-terminal L-threonyl-[protein] + acetyl-CoA = N-terminal N(alpha)-acetyl-L-threonyl-[protein] + CoA + H(+). It catalyses the reaction N-terminal L-methionyl-[protein] + acetyl-CoA = N-terminal N(alpha)-acetyl-L-methionyl-[protein] + CoA + H(+). The catalysed reaction is N-terminal L-prolyl-[protein] + acetyl-CoA = N-terminal N(alpha)-acetyl-L-prolyl-[protein] + CoA + H(+). The enzyme catalyses N-terminal L-valyl-[protein] + acetyl-CoA = N-terminal N(alpha)-acetyl-L-valyl-[protein] + CoA + H(+). Protein acetyltransferase with dual specificity triggering both N-alpha-acetylation (NTA), with a large spectrum of modified N-termini, including methionine, alanine, serine, threonine and to a lower extent valine and proline as substrates, and epsilon-lysine acetylation (KA). The chain is GCN5-related N-acetyltransferase 7, chloroplastic from Arabidopsis thaliana (Mouse-ear cress).